A 337-amino-acid chain; its full sequence is Tetraacyldisaccharide 4'-kinase (337 aa).

51–58 (HVGGAGKT) provides a ligand contact to ATP.

It belongs to the LpxK family.

The enzyme catalyses a lipid A disaccharide + ATP = a lipid IVA + ADP + H(+). The protein operates within glycolipid biosynthesis; lipid IV(A) biosynthesis; lipid IV(A) from (3R)-3-hydroxytetradecanoyl-[acyl-carrier-protein] and UDP-N-acetyl-alpha-D-glucosamine: step 6/6. In terms of biological role, transfers the gamma-phosphate of ATP to the 4'-position of a tetraacyldisaccharide 1-phosphate intermediate (termed DS-1-P) to form tetraacyldisaccharide 1,4'-bis-phosphate (lipid IVA). The chain is Tetraacyldisaccharide 4'-kinase from Afipia carboxidovorans (strain ATCC 49405 / DSM 1227 / KCTC 32145 / OM5) (Oligotropha carboxidovorans).